Here is a 327-residue protein sequence, read N- to C-terminus: Serum response factor homolog (327 aa).

Positions 12 to 43 (QKLQNASPALPEGTSSTPTPSSSTGLLPNGKK) are disordered. Residues 25-35 (TSSTPTPSSST) are compositionally biased toward low complexity. In terms of domain architecture, MADS-box spans 45–105 (KGRVKIKMEY…GHVYTYATPK (61 aa)). The interval 189–225 (TFGEDDYNNDESGDDSDSEEASSDIKEEYQGSPTMVK) is disordered. Positions 191 to 210 (GEDDYNNDESGDDSDSEEAS) are enriched in acidic residues.

In terms of tissue distribution, expressed in muscle, varying with age, decreasing twofold during the first week of adulthood.

It is found in the nucleus. Transcription factor. Regulates myogenesis, in cooperation with transcription factors hlh-1 and hnd-1. Required for maintenance of muscle in adulthood. This is Serum response factor homolog from Caenorhabditis elegans.